The chain runs to 93 residues: MSITRERKSELISEYCLKKDDTGSSFVQCAILSERIRNLTEHLKVHKKDFHCRRGLMVLVCRRRNVLQYVRKKYGDSEYLALIKRLGIRDIFH.

It belongs to the universal ribosomal protein uS15 family. Part of the 30S ribosomal subunit. Forms a bridge to the 50S subunit in the 70S ribosome, contacting the 23S rRNA.

Its function is as follows. One of the primary rRNA binding proteins, it binds directly to 16S rRNA where it helps nucleate assembly of the platform of the 30S subunit by binding and bridging several RNA helices of the 16S rRNA. Functionally, forms an intersubunit bridge (bridge B4) with the 23S rRNA of the 50S subunit in the ribosome. This is Small ribosomal subunit protein uS15 from Ehrlichia chaffeensis (strain ATCC CRL-10679 / Arkansas).